The following is a 161-amino-acid chain: E3 ubiquitin ligase complex SCF subunit sconC (161 aa).

The interval 102–161 is interaction with the F-box domain of F-box proteins; the sequence is ILAANYLDIKGLLDVGCKTVANMIKGKSPEEIRKTFNIQNDFTPEEEDQIRRENEWAEDR.

The protein belongs to the SKP1 family. In terms of assembly, component of the SCF (SKP1-CUL1-F-box protein) E3 ubiquitin ligase complexes.

The protein operates within protein modification; protein ubiquitination. In terms of biological role, essential component of the SCF (SKP1-CUL1-F-box protein) E3 ubiquitin ligase complexes, which mediate the ubiquitination and subsequent proteasomal degradation of target proteins. Controls sulfur metabolite repression, probably by mediating the inactivation or degradation of the metR transcription factor. In Aspergillus flavus (strain ATCC 200026 / FGSC A1120 / IAM 13836 / NRRL 3357 / JCM 12722 / SRRC 167), this protein is E3 ubiquitin ligase complex SCF subunit sconC (sconC).